The following is a 185-amino-acid chain: Iodate reductase subunit IdrB (185 aa).

Positions 1–46 form a signal peptide, tat-type signal; that stretch reads MTTHPIHLHHDDPAHGGERACMSRRSFLLAGGAMVTLASLPGTAVA. The region spanning 69-168 is the Rieske domain; it reads GEPLEFAYPY…LEVRGDDIYA (100 aa). [2Fe-2S] cluster-binding residues include Cys-109, His-111, Cys-130, and His-133.

It belongs to the AOX family. The iodate reductase (Idr) complex is composed of a molybdopterin-dependent iodate reductase (IdrA and IdrB subunits) and two associated peroxidases (IdrP1 and IdrP2). It depends on [2Fe-2S] cluster as a cofactor. In terms of processing, predicted to be exported by the Tat system. The position of the signal peptide cleavage has not been experimentally proven.

The protein localises to the periplasm. In terms of biological role, involved in iodate respiration. May accept electrons from cytochrome c551, and catalyze the reduction of iodate (IO(3)(-)) to produce the chemically unstable intermediate hypoiodous acid (HIO). This intermediate then undergoes abiotic disproportionation to yield two molecules of iodide (I(-)) and one molecule of iodate. The resultant iodate subsequently cycles back into the reductive pathway. The initial reduction of iodate may inadvertently produce low levels of incidental toxic H(2)O(2), which is detoxified by IdrP1 and IdrP2. The sequence is that of Iodate reductase subunit IdrB from Denitromonas iodatirespirans.